Reading from the N-terminus, the 344-residue chain is Homoserine O-acetyltransferase (344 aa).

Cysteine 142 functions as the Acyl-thioester intermediate in the catalytic mechanism. The substrate site is built by lysine 163 and serine 192. Residue histidine 235 is the Proton acceptor of the active site. The active site involves glutamate 237. Arginine 249 is a binding site for substrate.

Belongs to the MetA family.

It localises to the cytoplasm. It catalyses the reaction L-homoserine + acetyl-CoA = O-acetyl-L-homoserine + CoA. The protein operates within amino-acid biosynthesis; L-methionine biosynthesis via de novo pathway; O-acetyl-L-homoserine from L-homoserine: step 1/1. Transfers an acetyl group from acetyl-CoA to L-homoserine, forming acetyl-L-homoserine. This chain is Homoserine O-acetyltransferase, found in Bifidobacterium adolescentis (strain ATCC 15703 / DSM 20083 / NCTC 11814 / E194a).